The primary structure comprises 121 residues: Small ribosomal subunit protein uS13 (121 aa).

The disordered stretch occupies residues 92 to 121; it reads RKGLPVRGQSSKTNARTVKGPRKTVANKKK. Over residues 110–121 the composition is skewed to basic residues; it reads KGPRKTVANKKK.

This sequence belongs to the universal ribosomal protein uS13 family. As to quaternary structure, part of the 30S ribosomal subunit. Forms a loose heterodimer with protein S19. Forms two bridges to the 50S subunit in the 70S ribosome.

Located at the top of the head of the 30S subunit, it contacts several helices of the 16S rRNA. In the 70S ribosome it contacts the 23S rRNA (bridge B1a) and protein L5 of the 50S subunit (bridge B1b), connecting the 2 subunits; these bridges are implicated in subunit movement. Contacts the tRNAs in the A and P-sites. The chain is Small ribosomal subunit protein uS13 from Mycoplasma capricolum subsp. capricolum (strain California kid / ATCC 27343 / NCTC 10154).